The following is a 197-amino-acid chain: MSSKEQKTPEGQAPEEIIMDQHEEIEAVEPEASAEQVDPRDEKVANLEAQLAEAQTRERDGILRVKAEMENLRRRTELDIEKAHKFALEKFINELLPVIDSLDRALEVADKANPDMSAMVEGIELTLKSMLDVVRKFGVEVIAETNVPLDPNVHQAIAMVESDDVAPGNVLGIMQKGYTLNGRTIRAAMVTVAKAKA.

Positions 1 to 40 (MSSKEQKTPEGQAPEEIIMDQHEEIEAVEPEASAEQVDPR) are disordered.

Belongs to the GrpE family. As to quaternary structure, homodimer.

It localises to the cytoplasm. In terms of biological role, participates actively in the response to hyperosmotic and heat shock by preventing the aggregation of stress-denatured proteins, in association with DnaK and GrpE. It is the nucleotide exchange factor for DnaK and may function as a thermosensor. Unfolded proteins bind initially to DnaJ; upon interaction with the DnaJ-bound protein, DnaK hydrolyzes its bound ATP, resulting in the formation of a stable complex. GrpE releases ADP from DnaK; ATP binding to DnaK triggers the release of the substrate protein, thus completing the reaction cycle. Several rounds of ATP-dependent interactions between DnaJ, DnaK and GrpE are required for fully efficient folding. In Escherichia coli (strain K12 / DH10B), this protein is Protein GrpE.